Reading from the N-terminus, the 681-residue chain is DNA ligase (681 aa).

Residues 42–46, 91–92, and Glu-120 contribute to the NAD(+) site; these read DAEYD and SL. The N6-AMP-lysine intermediate role is filled by Lys-122. NAD(+) is bound by residues Arg-143, Glu-180, Lys-302, and Lys-326. Positions 420, 423, 438, and 444 each coordinate Zn(2+). One can recognise a BRCT domain in the interval 603-681; it reads ADAQPLLGQT…EAGLIELIGL (79 aa).

This sequence belongs to the NAD-dependent DNA ligase family. LigA subfamily. Mg(2+) serves as cofactor. Requires Mn(2+) as cofactor.

The enzyme catalyses NAD(+) + (deoxyribonucleotide)n-3'-hydroxyl + 5'-phospho-(deoxyribonucleotide)m = (deoxyribonucleotide)n+m + AMP + beta-nicotinamide D-nucleotide.. DNA ligase that catalyzes the formation of phosphodiester linkages between 5'-phosphoryl and 3'-hydroxyl groups in double-stranded DNA using NAD as a coenzyme and as the energy source for the reaction. It is essential for DNA replication and repair of damaged DNA. The chain is DNA ligase from Shewanella amazonensis (strain ATCC BAA-1098 / SB2B).